The following is a 373-amino-acid chain: AA9 family lytic polysaccharide monooxygenase A (373 aa).

The N-terminal stretch at 1–20 (MKSSTFGMLALAAAAKLVSA) is a signal peptide. Residue histidine 21 participates in Cu(2+) binding. The disordered stretch occupies residues 36–55 (EGNSQSGYIRSPPSNSPITD). The cysteines at positions 63 and 183 are disulfide-linked. Residue histidine 102 coordinates Cu(2+). The O2 site is built by histidine 169 and glutamine 178. Tyrosine 180 is a Cu(2+) binding site. The tract at residues 234 to 333 (GASGSSSSSS…NSVPQPSSNA (100 aa)) is disordered. Low complexity-rich tracts occupy residues 235-262 (ASGS…APSS) and 270-323 (PATS…AAPT). The span at 324 to 333 (NSVPQPSSNA) shows a compositional bias: polar residues. One can recognise a CBM1 domain in the interval 335 to 371 (GAVKEWYQCGGLNYSGSTQCEEGLTCKKWNPYYHQCV). Asparagine 347 carries N-linked (GlcNAc...) asparagine glycosylation.

This sequence belongs to the polysaccharide monooxygenase AA9 family. Requires Cu(2+) as cofactor.

It is found in the secreted. It carries out the reaction [(1-&gt;4)-beta-D-glucosyl]n+m + reduced acceptor + O2 = 4-dehydro-beta-D-glucosyl-[(1-&gt;4)-beta-D-glucosyl]n-1 + [(1-&gt;4)-beta-D-glucosyl]m + acceptor + H2O.. Its function is as follows. Lytic polysaccharide monooxygenase (LPMO) that depolymerizes crystalline and amorphous polysaccharides via the oxidation of scissile alpha- or beta-(1-4)-glycosidic bonds, yielding exclusively C4 oxidation products. Catalysis by LPMOs requires the reduction of the active-site copper from Cu(II) to Cu(I) by a reducing agent and H(2)O(2) or O(2) as a cosubstrate. In addition to cellulose, also cleaves the beta-(1!4)-glucan backbone of tamarind xyloglucan, but only next to unsubstituted glucosyl units. This is AA9 family lytic polysaccharide monooxygenase A from Aspergillus tamarii.